Reading from the N-terminus, the 324-residue chain is Probable nicotianamine synthase 4 (324 aa).

The protein belongs to the nicotianamine synthase (NAS)-like family.

The catalysed reaction is 3 S-adenosyl-L-methionine = nicotianamine + 3 S-methyl-5'-thioadenosine + 3 H(+). Synthesizes nicotianamine, a polyamine which serves as a sensor for the physiological iron status within the plant, and/or might be involved in the transport of iron. The chain is Probable nicotianamine synthase 4 (NAS4) from Arabidopsis thaliana (Mouse-ear cress).